The following is a 78-amino-acid chain: D-alanyl carrier protein (78 aa).

Residues 1 to 78 form the Carrier domain; the sequence is MDFNQEVLSV…QIIKQLNELR (78 aa). At Ser-36 the chain carries O-(pantetheine 4'-phosphoryl)serine.

The protein belongs to the DltC family. 4'-phosphopantetheine is transferred from CoA to a specific serine of apo-DCP.

Its subcellular location is the cytoplasm. It functions in the pathway cell wall biogenesis; lipoteichoic acid biosynthesis. Carrier protein involved in the D-alanylation of lipoteichoic acid (LTA). The loading of thioester-linked D-alanine onto DltC is catalyzed by D-alanine--D-alanyl carrier protein ligase DltA. The DltC-carried D-alanyl group is further transferred to cell membrane phosphatidylglycerol (PG) by forming an ester bond, probably catalyzed by DltD. D-alanylation of LTA plays an important role in modulating the properties of the cell wall in Gram-positive bacteria, influencing the net charge of the cell wall. This Bacillus licheniformis (strain ATCC 14580 / DSM 13 / JCM 2505 / CCUG 7422 / NBRC 12200 / NCIMB 9375 / NCTC 10341 / NRRL NRS-1264 / Gibson 46) protein is D-alanyl carrier protein.